We begin with the raw amino-acid sequence, 119 residues long: ATP-dependent Clp protease adapter protein ClpS (119 aa).

The tract at residues 1–29 (MICPPGENKSMAERKQGGQGNGVGSSVVT) is disordered.

Belongs to the ClpS family. As to quaternary structure, binds to the N-terminal domain of the chaperone ClpA.

In terms of biological role, involved in the modulation of the specificity of the ClpAP-mediated ATP-dependent protein degradation. The chain is ATP-dependent Clp protease adapter protein ClpS from Caulobacter vibrioides (strain ATCC 19089 / CIP 103742 / CB 15) (Caulobacter crescentus).